We begin with the raw amino-acid sequence, 332 residues long: Fructose-1,6-bisphosphatase class 1 (332 aa).

Mg(2+)-binding residues include Glu93, Asp113, Leu115, and Asp116. Substrate-binding positions include 116–119 (DGSS), Asn209, Tyr235, and Lys272. Position 278 (Glu278) interacts with Mg(2+).

Belongs to the FBPase class 1 family. In terms of assembly, homotetramer. Requires Mg(2+) as cofactor.

The protein resides in the cytoplasm. The catalysed reaction is beta-D-fructose 1,6-bisphosphate + H2O = beta-D-fructose 6-phosphate + phosphate. It participates in carbohydrate biosynthesis; gluconeogenesis. In Syntrophus aciditrophicus (strain SB), this protein is Fructose-1,6-bisphosphatase class 1.